A 286-amino-acid polypeptide reads, in one-letter code: Elongation factor Ts (286 aa).

The involved in Mg(2+) ion dislocation from EF-Tu stretch occupies residues 79–82; the sequence is TDFV.

Belongs to the EF-Ts family.

It localises to the cytoplasm. Associates with the EF-Tu.GDP complex and induces the exchange of GDP to GTP. It remains bound to the aminoacyl-tRNA.EF-Tu.GTP complex up to the GTP hydrolysis stage on the ribosome. The polypeptide is Elongation factor Ts (Wolbachia pipientis wMel).